The primary structure comprises 77 residues: Cell division topological specificity factor (77 aa).

This sequence belongs to the MinE family.

Prevents the cell division inhibition by proteins MinC and MinD at internal division sites while permitting inhibition at polar sites. This ensures cell division at the proper site by restricting the formation of a division septum at the midpoint of the long axis of the cell. This is Cell division topological specificity factor from Nautilia profundicola (strain ATCC BAA-1463 / DSM 18972 / AmH).